The primary structure comprises 494 residues: Trigger factor (494 aa).

Residues 169-254 (GDRITMDYVG…VKDVAAPGAV (86 aa)) enclose the PPIase FKBP-type domain. Positions 440–494 (LLAEDEGEAKAETKKAAPKKKAAAKSEAAEAGEGEEAAPKKKAAPKKKASEDSAE) are disordered.

The protein belongs to the FKBP-type PPIase family. Tig subfamily.

The protein resides in the cytoplasm. The enzyme catalyses [protein]-peptidylproline (omega=180) = [protein]-peptidylproline (omega=0). In terms of biological role, involved in protein export. Acts as a chaperone by maintaining the newly synthesized protein in an open conformation. Functions as a peptidyl-prolyl cis-trans isomerase. The protein is Trigger factor of Rhizobium etli (strain ATCC 51251 / DSM 11541 / JCM 21823 / NBRC 15573 / CFN 42).